The following is a 258-amino-acid chain: MARLRLLLRSARLLGLVALGLGLAAWVSLRERLPGADVTPLRQRLTRWWLARLCAALPFEVRVSGEAPRQPMLWVANHVSWTDIPLLGALAPLTFLSKAEVRAWPLAGWLAEKAGTLFIRRGSGDSRLINQRLAEQLHRGRNLLIFPEGTTTNGESLRTFHGRLMASALEAGVAVQPVAISYRRDGVPDAQAPFIGDDDLLSHLGRLLRGERGSVHIQLLEPIPSQGLDRAELARQAQQAVRLALFGTAAPTQTRRAA.

A helical transmembrane segment spans residues 7–29; sequence LLRSARLLGLVALGLGLAAWVSL.

The protein belongs to the 1-acyl-sn-glycerol-3-phosphate acyltransferase family. OlsA subfamily.

The protein resides in the membrane. The catalysed reaction is a lyso-ornithine lipid + a fatty acyl-[ACP] = an N(2)-[(3R)-3-(acyloxy)acyl]-L-ornithine lipid + holo-[ACP]. It functions in the pathway lipid metabolism. Functionally, catalyzes the second step in the formation of ornithine lipids, which are phosphorus-free membrane lipids. Uses acyl-acyl carrier protein (acyl-AcpP) as an acyl donor and converts lyso-ornithine lipid (LOL) into ornithine lipid (OL). This is Lyso-ornithine lipid O-acyltransferase from Pseudomonas aeruginosa (strain ATCC 15692 / DSM 22644 / CIP 104116 / JCM 14847 / LMG 12228 / 1C / PRS 101 / PAO1).